The sequence spans 203 residues: Holliday junction branch migration complex subunit RuvA (203 aa).

A domain I region spans residues 1–64 (MIGRLRGIII…EDAQLLYGFN (64 aa)). The tract at residues 65–142 (NKQERTLFKE…KGLHGDLFTP (78 aa)) is domain II. Residues 143–154 (AADLVLTSPASP) form a flexible linker region. The interval 155–203 (ATDDAEQEAVAALVALGYKPQEASRMVSKIARPDASSETLIREALRAAL) is domain III.

Belongs to the RuvA family. As to quaternary structure, homotetramer. Forms an RuvA(8)-RuvB(12)-Holliday junction (HJ) complex. HJ DNA is sandwiched between 2 RuvA tetramers; dsDNA enters through RuvA and exits via RuvB. An RuvB hexamer assembles on each DNA strand where it exits the tetramer. Each RuvB hexamer is contacted by two RuvA subunits (via domain III) on 2 adjacent RuvB subunits; this complex drives branch migration. In the full resolvosome a probable DNA-RuvA(4)-RuvB(12)-RuvC(2) complex forms which resolves the HJ.

The protein localises to the cytoplasm. Its function is as follows. The RuvA-RuvB-RuvC complex processes Holliday junction (HJ) DNA during genetic recombination and DNA repair, while the RuvA-RuvB complex plays an important role in the rescue of blocked DNA replication forks via replication fork reversal (RFR). RuvA specifically binds to HJ cruciform DNA, conferring on it an open structure. The RuvB hexamer acts as an ATP-dependent pump, pulling dsDNA into and through the RuvAB complex. HJ branch migration allows RuvC to scan DNA until it finds its consensus sequence, where it cleaves and resolves the cruciform DNA. In Shigella boydii serotype 18 (strain CDC 3083-94 / BS512), this protein is Holliday junction branch migration complex subunit RuvA.